A 281-amino-acid polypeptide reads, in one-letter code: Shikimate dehydrogenase (NADP(+)) (281 aa).

Shikimate-binding positions include 14–16 and Thr61; that span reads SKS. Lys65 functions as the Proton acceptor in the catalytic mechanism. Shikimate-binding residues include Asn86 and Asp105. Residues 130-134, 154-159, and Met221 contribute to the NADP(+) site; these read GAGGA and NRTAAK. A shikimate-binding site is contributed by Tyr223. Residue Gly245 participates in NADP(+) binding.

The protein belongs to the shikimate dehydrogenase family. In terms of assembly, homodimer.

It carries out the reaction shikimate + NADP(+) = 3-dehydroshikimate + NADPH + H(+). It functions in the pathway metabolic intermediate biosynthesis; chorismate biosynthesis; chorismate from D-erythrose 4-phosphate and phosphoenolpyruvate: step 4/7. Functionally, involved in the biosynthesis of the chorismate, which leads to the biosynthesis of aromatic amino acids. Catalyzes the reversible NADPH linked reduction of 3-dehydroshikimate (DHSA) to yield shikimate (SA). This chain is Shikimate dehydrogenase (NADP(+)), found in Azoarcus sp. (strain BH72).